Here is a 213-residue protein sequence, read N- to C-terminus: Thiamine-phosphate synthase (213 aa).

4-amino-2-methyl-5-(diphosphooxymethyl)pyrimidine is bound by residues 40-44 and Asn75; that span reads QFREK. Mg(2+) is bound by residues Asp76 and Asp95. Residue Ser113 coordinates 4-amino-2-methyl-5-(diphosphooxymethyl)pyrimidine. 139–141 serves as a coordination point for 2-[(2R,5Z)-2-carboxy-4-methylthiazol-5(2H)-ylidene]ethyl phosphate; the sequence is TPS. Lys142 contacts 4-amino-2-methyl-5-(diphosphooxymethyl)pyrimidine. Residues Gly171 and 191–192 each bind 2-[(2R,5Z)-2-carboxy-4-methylthiazol-5(2H)-ylidene]ethyl phosphate; that span reads IS.

It belongs to the thiamine-phosphate synthase family. It depends on Mg(2+) as a cofactor.

It catalyses the reaction 2-[(2R,5Z)-2-carboxy-4-methylthiazol-5(2H)-ylidene]ethyl phosphate + 4-amino-2-methyl-5-(diphosphooxymethyl)pyrimidine + 2 H(+) = thiamine phosphate + CO2 + diphosphate. The catalysed reaction is 2-(2-carboxy-4-methylthiazol-5-yl)ethyl phosphate + 4-amino-2-methyl-5-(diphosphooxymethyl)pyrimidine + 2 H(+) = thiamine phosphate + CO2 + diphosphate. The enzyme catalyses 4-methyl-5-(2-phosphooxyethyl)-thiazole + 4-amino-2-methyl-5-(diphosphooxymethyl)pyrimidine + H(+) = thiamine phosphate + diphosphate. Its pathway is cofactor biosynthesis; thiamine diphosphate biosynthesis; thiamine phosphate from 4-amino-2-methyl-5-diphosphomethylpyrimidine and 4-methyl-5-(2-phosphoethyl)-thiazole: step 1/1. In terms of biological role, condenses 4-methyl-5-(beta-hydroxyethyl)thiazole monophosphate (THZ-P) and 2-methyl-4-amino-5-hydroxymethyl pyrimidine pyrophosphate (HMP-PP) to form thiamine monophosphate (TMP). The protein is Thiamine-phosphate synthase of Staphylococcus aureus (strain JH1).